The sequence spans 102 residues: Large ribosomal subunit protein uL23c (102 aa).

It belongs to the universal ribosomal protein uL23 family. As to quaternary structure, part of the 50S ribosomal subunit.

Its subcellular location is the plastid. It is found in the chloroplast. In terms of biological role, binds to 23S rRNA. The chain is Large ribosomal subunit protein uL23c (rpl23) from Phaeodactylum tricornutum (strain CCAP 1055/1).